The chain runs to 651 residues: Probable export ATP-binding/permease protein Pfl01_2215 (651 aa).

One can recognise an ABC transporter domain in the interval 6–244 (LQLTGISRSF…LSNEDAVPKS (239 aa)). 42–49 (GASGSGKS) is an ATP binding site. The next 5 membrane-spanning stretches (helical) occupy residues 250–270 (LVAS…ALIS), 276–296 (LLTM…SAIG), 524–544 (LALL…IGVM), 585–605 (LGGA…SLFI), and 614–634 (LTSV…FGFV).

It belongs to the ABC transporter superfamily. Macrolide exporter (TC 3.A.1.122) family. In terms of assembly, probably part of a tripartite efflux system, which is composed of an inner membrane transporter, a periplasmic membrane fusion protein, and an outer membrane component.

It localises to the cell inner membrane. In terms of biological role, probably part of a tripartite efflux system. In Pseudomonas fluorescens (strain Pf0-1), this protein is Probable export ATP-binding/permease protein Pfl01_2215.